The sequence spans 172 residues: Co-chaperone protein HscB (172 aa).

Positions 2-74 (DYFTLFGLPI…LKRAEYMLSL (73 aa)) constitute a J domain.

It belongs to the HscB family. In terms of assembly, interacts with HscA and stimulates its ATPase activity. Interacts with IscU.

In terms of biological role, co-chaperone involved in the maturation of iron-sulfur cluster-containing proteins. Seems to help targeting proteins to be folded toward HscA. The protein is Co-chaperone protein HscB of Pectobacterium carotovorum subsp. carotovorum (strain PC1).